The primary structure comprises 245 residues: Precorrin-2 C(20)-methyltransferase (245 aa).

This sequence belongs to the precorrin methyltransferase family. In terms of assembly, homodimer.

The catalysed reaction is precorrin-2 + S-adenosyl-L-methionine = precorrin-3A + S-adenosyl-L-homocysteine + H(+). The protein operates within cofactor biosynthesis; adenosylcobalamin biosynthesis; cob(II)yrinate a,c-diamide from precorrin-2 (aerobic route): step 1/10. Functionally, methylates precorrin-2 at the C-20 position to produce precorrin-3A. The polypeptide is Precorrin-2 C(20)-methyltransferase (cobI) (Sinorhizobium sp).